A 210-amino-acid chain; its full sequence is Protein PF1979 (210 aa).

Residues 7-201 (EWGEFLVRLA…EEYPRGPVKR (195 aa)) enclose the AMMECR1 domain.

In Pyrococcus furiosus (strain ATCC 43587 / DSM 3638 / JCM 8422 / Vc1), this protein is Protein PF1979.